Consider the following 776-residue polypeptide: 5-methyltetrahydropteroyltriglutamate--homocysteine methyltransferase (776 aa).

5-methyltetrahydropteroyltri-L-glutamate is bound by residues 16 to 19 and lysine 112; that span reads RELK. Residues 432–434 and glutamate 485 contribute to the L-homocysteine site; that span reads IGS. L-methionine contacts are provided by residues 432–434 and glutamate 485; that span reads IGS. 5-methyltetrahydropteroyltri-L-glutamate-binding positions include 516-517 and tryptophan 562; that span reads RC. Aspartate 600 is an L-homocysteine binding site. Position 600 (aspartate 600) interacts with L-methionine. Position 606 (glutamate 606) interacts with 5-methyltetrahydropteroyltri-L-glutamate. Zn(2+) contacts are provided by histidine 642, cysteine 644, and glutamate 666. The Proton donor role is filled by histidine 695. A Zn(2+)-binding site is contributed by cysteine 727. The interval 755-776 is disordered; that stretch reads HAGAVHAGTPATRAEHAESALA. Over residues 767–776 the composition is skewed to basic and acidic residues; that stretch reads RAEHAESALA.

It belongs to the vitamin-B12 independent methionine synthase family. The cofactor is Zn(2+).

The catalysed reaction is 5-methyltetrahydropteroyltri-L-glutamate + L-homocysteine = tetrahydropteroyltri-L-glutamate + L-methionine. Its pathway is amino-acid biosynthesis; L-methionine biosynthesis via de novo pathway; L-methionine from L-homocysteine (MetE route): step 1/1. Functionally, catalyzes the transfer of a methyl group from 5-methyltetrahydrofolate to homocysteine resulting in methionine formation. The protein is 5-methyltetrahydropteroyltriglutamate--homocysteine methyltransferase of Ralstonia nicotianae (strain ATCC BAA-1114 / GMI1000) (Ralstonia solanacearum).